Reading from the N-terminus, the 402-residue chain is 3-isopropylmalate dehydratase large subunit 2 (402 aa).

Residues Cys280, Cys341, and Cys344 each contribute to the [4Fe-4S] cluster site.

Belongs to the aconitase/IPM isomerase family. LeuC type 2 subfamily. As to quaternary structure, heterodimer of LeuC and LeuD. [4Fe-4S] cluster is required as a cofactor.

It catalyses the reaction (2R,3S)-3-isopropylmalate = (2S)-2-isopropylmalate. Its pathway is amino-acid biosynthesis; L-leucine biosynthesis; L-leucine from 3-methyl-2-oxobutanoate: step 2/4. Functionally, catalyzes the isomerization between 2-isopropylmalate and 3-isopropylmalate, via the formation of 2-isopropylmaleate. The sequence is that of 3-isopropylmalate dehydratase large subunit 2 from Methanopyrus kandleri (strain AV19 / DSM 6324 / JCM 9639 / NBRC 100938).